We begin with the raw amino-acid sequence, 356 residues long: GDP-mannose 4,6 dehydratase (356 aa).

NADP(+) is bound by residues 12-17 (GITGQD), 69-70 (DL), 91-95 (LGAQS), and Tyr106. Residue Thr138 is part of the active site. Catalysis depends on nucleophile residues Glu140 and Tyr162. Residues Lys166, His192, and Arg197 each contribute to the NADP(+) site.

It belongs to the NAD(P)-dependent epimerase/dehydratase family. GDP-mannose 4,6-dehydratase subfamily. It depends on NADP(+) as a cofactor.

It catalyses the reaction GDP-alpha-D-mannose = GDP-4-dehydro-alpha-D-rhamnose + H2O. It participates in nucleotide-sugar biosynthesis; GDP-L-fucose biosynthesis via de novo pathway; GDP-L-fucose from GDP-alpha-D-mannose: step 1/2. In terms of biological role, participates in the synthesis of GDP-L-fucose, catalyzing the conversion of GDP-D-mannose to GDP-4-dehydro-6-deoxy-D-mannose (GDP-4-dehydro-alpha-D-rhamnose) which is further catalyzed by GDP-L-fucose synthase (ger). GDP-L-fucose is important for the synthesis of fucosylated N-glycans which are expressed on the cell surface. The polypeptide is GDP-mannose 4,6 dehydratase (gmd) (Dictyostelium discoideum (Social amoeba)).